The chain runs to 384 residues: Putative dioxygenase SSO1533 (384 aa).

The Fe cation site is built by histidine 296, glutamate 302, and histidine 332.

It belongs to the homogentisate dioxygenase family. The cofactor is Fe cation.

This chain is Putative dioxygenase SSO1533, found in Saccharolobus solfataricus (strain ATCC 35092 / DSM 1617 / JCM 11322 / P2) (Sulfolobus solfataricus).